The sequence spans 220 residues: Ribose-5-phosphate isomerase A (220 aa).

Substrate contacts are provided by residues 28–31, 81–84, and 94–97; these read TGST, DGAD, and KGGG. The active-site Proton acceptor is the E103. Residue K121 coordinates substrate.

The protein belongs to the ribose 5-phosphate isomerase family. In terms of assembly, homodimer.

It carries out the reaction aldehydo-D-ribose 5-phosphate = D-ribulose 5-phosphate. It participates in carbohydrate degradation; pentose phosphate pathway; D-ribose 5-phosphate from D-ribulose 5-phosphate (non-oxidative stage): step 1/1. Functionally, catalyzes the reversible conversion of ribose-5-phosphate to ribulose 5-phosphate. In Leptothrix cholodnii (strain ATCC 51168 / LMG 8142 / SP-6) (Leptothrix discophora (strain SP-6)), this protein is Ribose-5-phosphate isomerase A.